Here is a 244-residue protein sequence, read N- to C-terminus: Dihydropteridine reductase (244 aa).

Ala-2 bears the N-acetylalanine mark. 14 to 38 (LVYGGRGALGSRCVQAFRARNWWVA) is an NADP(+) binding site. 4 positions are modified to N6-succinyllysine: Lys-73, Lys-79, Lys-96, and Lys-102. Tyr-150 functions as the Proton acceptor in the catalytic mechanism.

The protein belongs to the short-chain dehydrogenases/reductases (SDR) family. Homodimer.

The enzyme catalyses 5,6,7,8-tetrahydropteridine + NAD(+) = 6,7-dihydropteridine + NADH + H(+). It carries out the reaction 5,6,7,8-tetrahydropteridine + NADP(+) = 6,7-dihydropteridine + NADPH + H(+). Catalyzes the conversion of quinonoid dihydrobiopterin into tetrahydrobiopterin. This chain is Dihydropteridine reductase (QDPR), found in Homo sapiens (Human).